Consider the following 131-residue polypeptide: Translation initiation factor 5A (131 aa).

At Lys37 the chain carries Hypusine.

It belongs to the eIF-5A family.

It localises to the cytoplasm. Its function is as follows. Functions by promoting the formation of the first peptide bond. The protein is Translation initiation factor 5A (eIF5A) of Methanococcus vannielii (strain ATCC 35089 / DSM 1224 / JCM 13029 / OCM 148 / SB).